A 437-amino-acid polypeptide reads, in one-letter code: Cytochrome b (437 aa).

Residues 45-65 traverse the membrane as a helical segment; the sequence is WIWGIVLAFTLVLQIVTGIVL. Residues H97 and H111 each coordinate heme b. Transmembrane regions (helical) follow at residues 100-120, 129-149, 156-176, 194-214, 248-268, 298-318, 330-350, 365-385, and 391-411; these read GASL…YYGS, WIVG…GYVL, FWGA…GPSI, FFSL…IHIW, FVIK…AVVA, FLPF…VILV, FFGV…PWLD, MWFW…AMPT, and WISL…LPLL. H198 and H212 together coordinate heme b.

Belongs to the cytochrome b family. In terms of assembly, the main subunits of complex b-c1 are: cytochrome b, cytochrome c1 and the Rieske protein. It depends on heme b as a cofactor.

Its subcellular location is the cell membrane. Its function is as follows. Component of the ubiquinol-cytochrome c reductase complex (complex III or cytochrome b-c1 complex), which is a respiratory chain that generates an electrochemical potential coupled to ATP synthesis. This Rhodobacter capsulatus (strain ATCC BAA-309 / NBRC 16581 / SB1003) protein is Cytochrome b (petB).